A 222-amino-acid chain; its full sequence is Coiled-coil domain-containing protein 70 (222 aa).

The stretch at 129–153 (NALWERDRNLLQEDKALWEEEKALW) forms a coiled coil.

The polypeptide is Coiled-coil domain-containing protein 70 (Homo sapiens (Human)).